The primary structure comprises 263 residues: Ribosomal RNA large subunit methyltransferase E (263 aa).

S-adenosyl-L-methionine contacts are provided by Gly48, Trp50, Asp68, Asp88, and Asp118. The active-site Proton acceptor is Lys158. The TRAM domain occupies 205 to 263 (PVREGDIVEATIEDIGEEGDGIAKVENFTVFVSGVEDGETVEVRIDDVKPRYAFAEPVE).

Belongs to the class I-like SAM-binding methyltransferase superfamily. RNA methyltransferase RlmE family.

It is found in the cytoplasm. It catalyses the reaction uridine(2552) in 23S rRNA + S-adenosyl-L-methionine = 2'-O-methyluridine(2552) in 23S rRNA + S-adenosyl-L-homocysteine + H(+). Specifically methylates the uridine in position 2552 of 23S rRNA at the 2'-O position of the ribose in the fully assembled 50S ribosomal subunit. This chain is Ribosomal RNA large subunit methyltransferase E, found in Haloarcula marismortui (strain ATCC 43049 / DSM 3752 / JCM 8966 / VKM B-1809) (Halobacterium marismortui).